A 263-amino-acid polypeptide reads, in one-letter code: 7beta-hydroxysteroid dehydrogenase (263 aa).

NADP(+) is bound by residues 17–21 (TEGVG), 40–41 (RR), and 66–67 (DF). Tyr156 acts as the Proton acceptor in catalysis. Ser240 lines the NADP(+) pocket.

Belongs to the short-chain dehydrogenases/reductases (SDR) family.

It carries out the reaction a 7beta-hydroxysteroid + NADP(+) = a 7-oxosteroid + NADPH + H(+). It catalyses the reaction 7-oxolithocholate + NADPH + H(+) = ursodeoxycholate + NADP(+). Functionally, 7beta-hydroxysteroid dehydrogenase that catalyzes the reduction of the 7-oxo group of 7-oxo-lithocholate (7-oxo-LCA), to yield ursodeoxycholate (UDCA). As R.gnavus is a common core bacterium of the human gut microbiota, this enzyme contributes to the formation of UDCA in the human colon. UDCA is regarded as a chemopreventive beneficial secondary bile acid due to its low hydrophobicity; it protects hepatocytes and bile duct epithelial cells against necrosis and apoptosis induced by more hydrophobic secondary bile acids like deoxycholate (DCA). This enzyme is also able to catalyze the reverse reaction in vitro, i.e. the oxidation of the 7beta-hydroxy group of UDCA to 7-oxo-LCA, but much less efficiently than the reduction reaction. In Mediterraneibacter gnavus (strain ATCC 29149 / DSM 114966 / JCM 6515 / VPI C7-9) (Ruminococcus gnavus), this protein is 7beta-hydroxysteroid dehydrogenase.